Reading from the N-terminus, the 156-residue chain is Large ribosomal subunit protein uL30 (156 aa).

This sequence belongs to the universal ribosomal protein uL30 family. As to quaternary structure, part of the 50S ribosomal subunit.

The sequence is that of Large ribosomal subunit protein uL30 from Sulfolobus acidocaldarius (strain ATCC 33909 / DSM 639 / JCM 8929 / NBRC 15157 / NCIMB 11770).